The sequence spans 159 residues: Ribosomal RNA large subunit methyltransferase H (159 aa).

S-adenosyl-L-methionine contacts are provided by residues leucine 76, glycine 108, and 127–132; that span reads FSKMTL.

This sequence belongs to the RNA methyltransferase RlmH family. Homodimer.

It localises to the cytoplasm. The enzyme catalyses pseudouridine(1915) in 23S rRNA + S-adenosyl-L-methionine = N(3)-methylpseudouridine(1915) in 23S rRNA + S-adenosyl-L-homocysteine + H(+). Its function is as follows. Specifically methylates the pseudouridine at position 1915 (m3Psi1915) in 23S rRNA. This is Ribosomal RNA large subunit methyltransferase H from Bacillus cereus (strain ATCC 14579 / DSM 31 / CCUG 7414 / JCM 2152 / NBRC 15305 / NCIMB 9373 / NCTC 2599 / NRRL B-3711).